The sequence spans 854 residues: MGRLLIKILIIAIGISIGIGNLYVTVFYGIPVWKNSTVQAFCMTPNTNMWATTNCIPDDHDNTEVPLNITEAFEAWDNPLVKQAESNIHLLFEQTMRPCVKLSPICIKMSCVELNGTATTKATTTATTTMTTPCQNCSTEQIEGEMAEEPASNCTFAIAGYQRDVKKNYSMTWYDQELVCNNKTGSEKGSKDCYMIHCNDSVIKEACDKTYWDTLRVRYCAPAGYALLKCNDKDYRGFAPKCKNVSVVHCTRLINTTITTGIGLNGSRSENRTEIWQKGGNDNDTVIIKLNKFYNLTVRCRRPGNKTVLPVTIMAGLVFHSQKYNTRLKQAWCHFQGDWKGAWKEVREEVKKVKNLTEVSIENIHLRRIWGDPESANFWFNCQGEFFYCKMDWFINYLNNRTEDAEGTNRTCDKGKPGPGPCVQRTYVACHIRQVVNDWYTVSKKVYAPPREGHLECNSSVTALYVAIDYNNKSGPINVTLSPQVRSIWAYELGDYKLVEITPIGFAPTDVRRYTGPTREKRVPFVLGFLGFLGAAGTAMGAAATTLTVQSRHLLAGILQQQKNLLAAVEQQQQLLKLTIWGVKNLNARVTALEKYLEDQARLNSWGCAWKQVCHTTVPWKYNNTPKWDNMTWLEWERQINALEGNITQLLEEAQNQESKNLDLYQKLDDWSGFWSWFSLSTWLGYVKIGFLVIVIILGLRFAWVLWGCIRNIRQGYNPLPQIHIHSSAERPDNGGGQDRGGESSSSKLIRLQEESSTPSRINNWWLNFKSCSLRIRTWCYNICLTLLIFIRTAVGYLQYGLQQLQEAATGLAQALARAAREAWGRLGAIVRSAYRAVINSPRRVRQGLEKVLG.

A signal peptide spans 1–20 (MGRLLIKILIIAIGISIGIG). Residues 21-705 (NLYVTVFYGI…IILGLRFAWV (685 aa)) lie on the Extracellular side of the membrane. N-linked (GlcNAc...) asparagine; by host glycosylation occurs at Asn35. Cys42 and Cys55 are oxidised to a cystine. Asn68, Asn115, Asn136, Asn153, Asn168, Asn182, and Asn199 each carry an N-linked (GlcNAc...) asparagine; by host glycan. 5 disulfide bridges follow: Cys99–Cys207, Cys106–Cys198, Cys111–Cys154, Cys220–Cys250, and Cys230–Cys242. Residues 111–153 (CVELNGTATTKATTTATTTMTTPCQNCSTEQIEGEMAEEPASN) form a V1 region. Residues 154-198 (CTFAIAGYQRDVKKNYSMTWYDQELVCNNKTGSEKGSKDCYMIHC) form a V2 region. Residues Asn244, Asn255, Asn265, Asn271, Asn283, Asn295, Asn305, Asn355, Asn400, Asn409, Asn458, Asn472, and Asn478 are each glycosylated (N-linked (GlcNAc...) asparagine; by host). The segment at 300-332 (CRRPGNKTVLPVTIMAGLVFHSQKYNTRLKQAW) is V3. Cys300 and Cys333 are disulfide-bonded. 2 cysteine pairs are disulfide-bonded: Cys382-Cys457 and Cys389-Cys430. A V4 region spans residues 389-430 (CKMDWFINYLNNRTEDAEGTNRTCDKGKPGPGPCVQRTYVAC). A V5 region spans residues 473 to 481 (KSGPINVTL). The interval 523–543 (VPFVLGFLGFLGAAGTAMGAA) is fusion peptide. The segment at 586-602 (LNARVTALEKYLEDQAR) is immunosuppression. 2 N-linked (GlcNAc...) asparagine; by host glycosylation sites follow: Asn630 and Asn646. Residues 633–672 (WLEWERQINALEGNITQLLEEAQNQESKNLDLYQKLDDWS) are a coiled coil. The tract at residues 667–688 (KLDDWSGFWSWFSLSTWLGYVK) is MPER; binding to GalCer. A helical membrane pass occupies residues 706–726 (LWGCIRNIRQGYNPLPQIHIH). The YXXL motif; contains endocytosis signal signature appears at 717–720 (YNPL). Residues 727–854 (SSAERPDNGG…VRQGLEKVLG (128 aa)) are Cytoplasmic-facing.

As to quaternary structure, the mature envelope protein (Env) consists of a homotrimer of non-covalently associated gp120-gp41 heterodimers. The resulting complex protrudes from the virus surface as a spike. Interacts with host CD4 and CCR5. Gp120 also interacts with the C-type lectins CD209/DC-SIGN and CLEC4M/DC-SIGNR (collectively referred to as DC-SIGN(R)). The mature envelope protein (Env) consists of a homotrimer of non-covalently associated gp120-gp41 heterodimers. The resulting complex protrudes from the virus surface as a spike. Specific enzymatic cleavages in vivo yield mature proteins. Envelope glycoproteins are synthesized as an inactive precursor that is heavily N-glycosylated and processed likely by host cell furin in the Golgi to yield the mature SU and TM proteins. The cleavage site between SU and TM requires the minimal sequence [KR]-X-[KR]-R.

The protein resides in the virion membrane. The protein localises to the host cell membrane. Its subcellular location is the host endosome membrane. The surface protein gp120 (SU) attaches the virus to the host lymphoid cell by binding to the primary receptor CD4. This interaction induces a structural rearrangement creating a high affinity binding site for a chemokine coreceptor like CCR5. This peculiar 2 stage receptor-interaction strategy allows gp120 to maintain the highly conserved coreceptor-binding site in a cryptic conformation, protected from neutralizing antibodies. These changes are transmitted to the transmembrane protein gp41 and are thought to activate its fusogenic potential by unmasking its fusion peptide. Functionally, surface protein gp120 (SU) may target the virus to gut-associated lymphoid tissue (GALT) by binding host ITGA4/ITGB7 (alpha-4/beta-7 integrins), a complex that mediates T-cell migration to the GALT. Interaction between gp120 and ITGA4/ITGB7 would allow the virus to enter GALT early in the infection, infecting and killing most of GALT's resting CD4+ T-cells. This T-cell depletion is believed to be the major insult to the host immune system leading to AIDS. Its function is as follows. The surface protein gp120 is a ligand for CD209/DC-SIGN and CLEC4M/DC-SIGNR, which are respectively found on dendritic cells (DCs), and on endothelial cells of liver sinusoids and lymph node sinuses. These interactions allow capture of viral particles at mucosal surfaces by these cells and subsequent transmission to permissive cells. DCs are professional antigen presenting cells, critical for host immunity by inducing specific immune responses against a broad variety of pathogens. They act as sentinels in various tissues where they take up antigen, process it, and present it to T-cells following migration to lymphoid organs. SIV subverts the migration properties of dendritic cells to gain access to CD4+ T-cells in lymph nodes. Virus transmission to permissive T-cells occurs either in trans (without DCs infection, through viral capture and transmission), or in cis (following DCs productive infection, through the usual CD4-gp120 interaction), thereby inducing a robust infection. In trans infection, bound virions remain infectious over days and it is proposed that they are not degraded, but protected in non-lysosomal acidic organelles within the DCs close to the cell membrane thus contributing to the viral infectious potential during DCs' migration from the periphery to the lymphoid tissues. On arrival at lymphoid tissues, intact virions recycle back to DCs' cell surface allowing virus transmission to CD4+ T-cells. Virion capture also seems to lead to MHC-II-restricted viral antigen presentation, and probably to the activation of SIV-specific CD4+ cells. In terms of biological role, the transmembrane protein gp41 (TM) acts as a class I viral fusion protein. Under the current model, the protein has at least 3 conformational states: pre-fusion native state, pre-hairpin intermediate state, and post-fusion hairpin state. During fusion of viral and target intracellular membranes, the coiled coil regions (heptad repeats) assume a trimer-of-hairpins structure, positioning the fusion peptide in close proximity to the C-terminal region of the ectodomain. The formation of this structure appears to drive apposition and subsequent fusion of viral and target cell membranes. Complete fusion occurs in host cell endosomes. The virus undergoes clathrin-dependent internalization long before endosomal fusion, thus minimizing the surface exposure of conserved viral epitopes during fusion and reducing the efficacy of inhibitors targeting these epitopes. Membranes fusion leads to delivery of the nucleocapsid into the cytoplasm. The envelope glycoprotein gp160 precursor down-modulates cell surface CD4 antigen by interacting with it in the endoplasmic reticulum and blocking its transport to the cell surface. Functionally, the gp120-gp41 heterodimer allows rapid transcytosis of the virus through CD4 negative cells such as simple epithelial monolayers of the intestinal, rectal and endocervical epithelial barriers. Both gp120 and gp41 specifically recognize glycosphingolipids galactosyl-ceramide (GalCer) or 3' sulfo-galactosyl-ceramide (GalS) present in the lipid rafts structures of epithelial cells. Binding to these alternative receptors allows the rapid transcytosis of the virus through the epithelial cells. This transcytotic vesicle-mediated transport of virions from the apical side to the basolateral side of the epithelial cells does not involve infection of the cells themselves. This is Envelope glycoprotein gp160 (env) from Cercopithecidae (Old World monkeys).